The sequence spans 201 residues: Recombination protein RecR (201 aa).

The C4-type zinc-finger motif lies at Cys60 to Cys75. The Toprim domain occupies Ala83 to Pro178.

The protein belongs to the RecR family.

In terms of biological role, may play a role in DNA repair. It seems to be involved in an RecBC-independent recombinational process of DNA repair. It may act with RecF and RecO. This chain is Recombination protein RecR, found in Brucella ovis (strain ATCC 25840 / 63/290 / NCTC 10512).